The chain runs to 214 residues: Methyltransferase HEMK2 (214 aa).

S-adenosyl-L-methionine-binding residues include T29, E51, G53, D77, D103, L104, and N122. N122 lines the a protein pocket.

The protein belongs to the eukaryotic/archaeal PrmC-related family. Heterodimer; heterodimerization with TRMT112 is required for S-adenosyl-L-methionine-binding. In terms of processing, ubiquitinated, leading to its degradation by the proteasome. As to expression, highly expressed in undifferentiated embryonic stem cells (at protein level). Also expressed in testis and brain, weakly expressed in differentiated embryonic stem cells and kidney. Not expressed in muscle, heart, placenta, pancreas, lung and stomach.

The protein resides in the nucleus. The catalysed reaction is L-lysyl-[histone] + S-adenosyl-L-methionine = N(6)-methyl-L-lysyl-[histone] + S-adenosyl-L-homocysteine + H(+). It carries out the reaction L-glutaminyl-[protein] + S-adenosyl-L-methionine = N(5)-methyl-L-glutaminyl-[protein] + S-adenosyl-L-homocysteine + H(+). It catalyses the reaction methylarsonous acid + S-adenosyl-L-methionine = dimethylarsinate + S-adenosyl-L-homocysteine + 2 H(+). Functionally, methyltransferase that can methylate proteins and, to a lower extent, arsenic. Catalytic subunit of a heterodimer with TRMT112, which monomethylates 'Lys-12' of histone H4 (H4K12me1), a modification present at the promoters of numerous genes encoding cell cycle regulators. Catalytic subunit of a heterodimer with TRMT112, which catalyzes N5-methylation of Glu residue of proteins with a Gly-Gln-Xaa-Xaa-Xaa-Arg motif. Methylates ETF1 on 'Gln-185'; ETF1 needs to be complexed to ERF3 in its GTP-bound form to be efficiently methylated. May also play a role in the modulation of arsenic-induced toxicity by mediating the conversion of monomethylarsonous acid (3+) into the less toxic dimethylarsonic acid. It however only plays a limited role in arsenic metabolism compared with AS3MT. The protein is Methyltransferase HEMK2 of Mus musculus (Mouse).